A 240-amino-acid polypeptide reads, in one-letter code: Probable hydroxyacylglutathione hydrolase (240 aa).

Residues His33, His35, Asp37, His38, His95, and Asp119 each contribute to the Zn(2+) site. Substrate is bound by residues Arg128, His158–Tyr160, and Arg234–Lys237. His158 is a Zn(2+) binding site.

It belongs to the metallo-beta-lactamase superfamily. Glyoxalase II family. Zn(2+) serves as cofactor.

The enzyme catalyses an S-(2-hydroxyacyl)glutathione + H2O = a 2-hydroxy carboxylate + glutathione + H(+). The protein operates within secondary metabolite metabolism; methylglyoxal degradation; (R)-lactate from methylglyoxal: step 2/2. In terms of biological role, thiolesterase that catalyzes the hydrolysis of S-D-lactoyl-glutathione to form glutathione and D-lactic acid. The sequence is that of Probable hydroxyacylglutathione hydrolase from Schistosoma mansoni (Blood fluke).